The following is a 285-amino-acid chain: Dihydropteroate synthase (285 aa).

The Pterin-binding domain occupies 18 to 276 (PKIMGIVNLT…DVKATADALK (259 aa)). Asn25 is a Mg(2+) binding site. Residues Thr66, Asp99, Asn119, Asp190, Lys229, and 264 to 266 (RVH) each bind (7,8-dihydropterin-6-yl)methyl diphosphate.

The protein belongs to the DHPS family. Homodimer. Mg(2+) serves as cofactor.

The catalysed reaction is (7,8-dihydropterin-6-yl)methyl diphosphate + 4-aminobenzoate = 7,8-dihydropteroate + diphosphate. It participates in cofactor biosynthesis; tetrahydrofolate biosynthesis; 7,8-dihydrofolate from 2-amino-4-hydroxy-6-hydroxymethyl-7,8-dihydropteridine diphosphate and 4-aminobenzoate: step 1/2. In terms of biological role, catalyzes the condensation of para-aminobenzoate (pABA) with 6-hydroxymethyl-7,8-dihydropterin diphosphate (DHPt-PP) to form 7,8-dihydropteroate (H2Pte), the immediate precursor of folate derivatives. The protein is Dihydropteroate synthase (folP) of Neisseria meningitidis serogroup B (strain ATCC BAA-335 / MC58).